Consider the following 355-residue polypeptide: 3-isopropylmalate dehydrogenase (355 aa).

Position 77–90 (77–90 (GAKWDNLPREKRPE)) interacts with NAD(+). Residues arginine 97, arginine 107, arginine 135, and aspartate 220 each coordinate substrate. Mg(2+)-binding residues include aspartate 220, aspartate 244, and aspartate 248. 277-289 (GSAPDIAGQGIAN) serves as a coordination point for NAD(+).

The protein belongs to the isocitrate and isopropylmalate dehydrogenases family. LeuB type 1 subfamily. In terms of assembly, homodimer. The cofactor is Mg(2+). Mn(2+) is required as a cofactor.

It is found in the cytoplasm. The enzyme catalyses (2R,3S)-3-isopropylmalate + NAD(+) = 4-methyl-2-oxopentanoate + CO2 + NADH. It participates in amino-acid biosynthesis; L-leucine biosynthesis; L-leucine from 3-methyl-2-oxobutanoate: step 3/4. Its function is as follows. Catalyzes the oxidation of 3-carboxy-2-hydroxy-4-methylpentanoate (3-isopropylmalate) to 3-carboxy-4-methyl-2-oxopentanoate. The product decarboxylates to 4-methyl-2 oxopentanoate. The protein is 3-isopropylmalate dehydrogenase of Sulfurimonas denitrificans (strain ATCC 33889 / DSM 1251) (Thiomicrospira denitrificans (strain ATCC 33889 / DSM 1251)).